Consider the following 218-residue polypeptide: MMRREDEEEEGTMMKAKGDLEMKEEEEISETGELVGPFVSAMPTPMPHNKGTRFSEAWEYFHLAPARAGHHPNQYATCRLCGRQVSRGPGVNVGTTALWKHLKSMHREELEKSGHGQAGQRQDPRPHGPQLPTGIEGNWGRLLEQVGTMALWASQREKEVLRRERAVEWRERAVEKRERALEEVERAILEMKWKVRAEKEACQREKELPAAVHPFHFV.

Positions 1–11 (MMRREDEEEEG) are enriched in acidic residues. The interval 1–24 (MMRREDEEEEGTMMKAKGDLEMKE) is disordered. The segment at 52-113 (TRFSEAWEYF…SMHREELEKS (62 aa)) adopts a BED-type zinc-finger fold. Positions 78, 81, 101, and 106 each coordinate Zn(2+). Residues 104-137 (SMHREELEKSGHGQAGQRQDPRPHGPQLPTGIEG) form a disordered region. Positions 105 to 114 (MHREELEKSG) are enriched in basic and acidic residues.

In terms of tissue distribution, expressed in keratinocytes.

It localises to the nucleus. In terms of biological role, transcriptional regulator which has intrinsic repressor activity and which competes with the transcriptional activator IRF1 for binding to the 5'-[CA]GAA[AC]C[CT]-3' consensus sequence in gene promoters. May thereby play a role in keratinocyte differentiation. This is Zinc finger BED domain-containing protein 2 (ZBED2) from Homo sapiens (Human).